The chain runs to 424 residues: Histidine--tRNA ligase (424 aa).

It belongs to the class-II aminoacyl-tRNA synthetase family. In terms of assembly, homodimer.

The protein localises to the cytoplasm. The catalysed reaction is tRNA(His) + L-histidine + ATP = L-histidyl-tRNA(His) + AMP + diphosphate + H(+). The protein is Histidine--tRNA ligase of Sodalis glossinidius (strain morsitans).